The following is a 207-amino-acid chain: Small ribosomal subunit protein uS4c (207 aa).

In terms of domain architecture, S4 RNA-binding spans 92-153 (MRLDNILFRL…PKTYQSILSK (62 aa)).

It belongs to the universal ribosomal protein uS4 family. Part of the 30S ribosomal subunit. Contacts protein S5. The interaction surface between S4 and S5 is involved in control of translational fidelity.

The protein localises to the plastid. It localises to the chloroplast. Its function is as follows. One of the primary rRNA binding proteins, it binds directly to 16S rRNA where it nucleates assembly of the body of the 30S subunit. In terms of biological role, with S5 and S12 plays an important role in translational accuracy. The polypeptide is Small ribosomal subunit protein uS4c (rps4) (Equisetum hyemale (Dutch rush)).